The following is a 348-amino-acid chain: Mamu class I histocompatibility antigen, alpha chain F (348 aa).

A signal peptide spans 1-21 (MAPRTLLLVLSGALALTETWA). The segment at 22–113 (GSHSLRYFST…LLLRYNQSEA (92 aa)) is alpha-1. At 22-307 (GSHSLRYFST…ESSSQPTIPI (286 aa)) the chain is on the extracellular side. Asn109 carries N-linked (GlcNAc...) asparagine glycosylation. Positions 114–205 (GSHTLQGMNG…ENGKETLQRA (92 aa)) are alpha-2. Disulfide bonds link Cys124-Cys187 and Cys226-Cys282. The tract at residues 206–297 (DPPKAHVAHH…GLPQPLTLRW (92 aa)) is alpha-3. An Ig-like C1-type domain is found at 208-296 (PKAHVAHHPI…EGLPQPLTLR (89 aa)). Residues 298–307 (ESSSQPTIPI) form a connecting peptide region. A helical membrane pass occupies residues 308-331 (VGIVAGLAVLAVVVTGAVVAAVMW). At 332 to 348 (RRKSSDRNRGSYSQPTM) the chain is on the cytoplasmic side.

The protein belongs to the MHC class I family. Heterodimer of an alpha chain and a beta chain (beta-2-microglobulin).

The protein localises to the membrane. Its function is as follows. Involved in the presentation of foreign antigens to the immune system. The protein is Mamu class I histocompatibility antigen, alpha chain F (Mamu-F) of Macaca mulatta (Rhesus macaque).